We begin with the raw amino-acid sequence, 434 residues long: Glutamate-1-semialdehyde 2,1-aminomutase 1 (434 aa).

Position 270 is an N6-(pyridoxal phosphate)lysine (K270).

It belongs to the class-III pyridoxal-phosphate-dependent aminotransferase family. HemL subfamily. In terms of assembly, homodimer. Requires pyridoxal 5'-phosphate as cofactor.

Its subcellular location is the cytoplasm. It carries out the reaction (S)-4-amino-5-oxopentanoate = 5-aminolevulinate. The protein operates within porphyrin-containing compound metabolism; protoporphyrin-IX biosynthesis; 5-aminolevulinate from L-glutamyl-tRNA(Glu): step 2/2. The protein is Glutamate-1-semialdehyde 2,1-aminomutase 1 of Bacillus cereus (strain ATCC 10987 / NRS 248).